We begin with the raw amino-acid sequence, 482 residues long: ATP-dependent rRNA helicase rrp3 (482 aa).

Residues Met-1–Thr-55 are disordered. Residues Glu-44 to Glu-53 are compositionally biased toward acidic residues. The Q motif motif lies at Lys-56–Arg-84. The Helicase ATP-binding domain maps to Ile-87–Val-258. ATP is bound at residue Ala-100–Thr-107. The DEAD box motif lies at Asp-206–Asp-209. Residues His-282–Met-430 enclose the Helicase C-terminal domain. Composition is skewed to basic and acidic residues over residues Arg-444–Lys-456 and Arg-472–Gly-482. The segment at Arg-444–Gly-482 is disordered.

Belongs to the DEAD box helicase family. DDX47/RRP3 subfamily. As to quaternary structure, interacts with the SSU processome.

Its subcellular location is the nucleus. It catalyses the reaction ATP + H2O = ADP + phosphate + H(+). ATP-dependent rRNA helicase required for pre-ribosomal RNA processing. Involved in the maturation of the 35S-pre-rRNA and to its cleavage to mature 18S rRNA. The polypeptide is ATP-dependent rRNA helicase rrp3 (Sclerotinia sclerotiorum (strain ATCC 18683 / 1980 / Ss-1) (White mold)).